A 390-amino-acid chain; its full sequence is Dynein regulatory complex subunit 5 (390 aa).

LRR repeat units lie at residues 182–205 (TETLTHLDLSNNSLDDDKVRMLAS), 210–233 (NLSITHLNLSHNKIADRGVRALAK), and 238–261 (HSVISLLELHDNQIHTEGAESLAR).

Belongs to the DRC5 family. In terms of assembly, component of the nexin-dynein regulatory complex (N-DRC). Interacts with DRC1, DRC2, DRC3, DRC4, DRC7 and DRC11.

It localises to the cell projection. The protein resides in the cilium. Its subcellular location is the flagellum. The protein localises to the cytoplasm. It is found in the cytoskeleton. It localises to the flagellum axoneme. In terms of biological role, component of the nexin-dynein regulatory complex (N-DRC) a key regulator of ciliary/flagellar motility which maintains the alignment and integrity of the distal axoneme and regulates microtubule sliding in motile axonemes. May play a role in the assembly of N-DRC. This is Dynein regulatory complex subunit 5 from Chlamydomonas reinhardtii (Chlamydomonas smithii).